The chain runs to 385 residues: Glucans biosynthesis protein C (385 aa).

10 consecutive transmembrane segments (helical) span residues 17–37 (AWLM…SHTW), 60–80 (MQVF…RYPL), 91–111 (VGIP…IMLQ), 137–157 (ISHL…VWIF), 173–193 (KFSM…YAVI), 212–232 (FIVM…LAFI), 239–259 (LFTT…VAYL), 274–294 (TESV…FSFG), 311–331 (ASLF…AYIT), and 338–358 (WLGF…LYEI).

The protein belongs to the acyltransferase 3 family. OpgC subfamily.

The protein resides in the cell membrane. Its pathway is glycan metabolism; osmoregulated periplasmic glucan (OPG) biosynthesis. Its function is as follows. Necessary for the succinyl substitution of periplasmic glucans. Could catalyze the transfer of succinyl residues from the cytoplasmic side of the membrane to the nascent glucan backbones on the periplasmic side of the membrane. In Escherichia coli (strain K12 / MC4100 / BW2952), this protein is Glucans biosynthesis protein C.